Reading from the N-terminus, the 345-residue chain is MKNVAVIGAGSWGTALSLVLADNGHHVTLVARREEIAREINERHTNETYLPSIEIPSSIVATCSMEEIIDVEIIVLVVPTKAIRQAVRSLNDVLKWPVTIVHASKGIEPGSHLRISEMIEEELEPTLLKEVVVLSGPSHAEEVSLRQPTTVTVSSKSLSTTKQIQDLFMNQQFRVYTNEDLIGVEIGGALKNIIALACGLTNGLGYGDNTKAAIMTRGLAEIGRLGVKLGASPLTFAGLSGLGDLIVTCTSIHSRNWRAGQMLGKGKSPAEVEESMGMVVEGIRTTQAAHELAQKLQIEMPITSALYSVLFEGKKPEHAADELMGRVKKHEMENLHDVVSDQKND.

NADPH is bound by residues S11, W12, R32, R33, and K105. Sn-glycerol 3-phosphate contacts are provided by K105, G136, and S138. A140 is an NADPH binding site. 5 residues coordinate sn-glycerol 3-phosphate: K191, D244, S254, R255, and N256. The active-site Proton acceptor is the K191. An NADPH-binding site is contributed by R255. V279 and E281 together coordinate NADPH.

This sequence belongs to the NAD-dependent glycerol-3-phosphate dehydrogenase family.

It localises to the cytoplasm. It catalyses the reaction sn-glycerol 3-phosphate + NAD(+) = dihydroxyacetone phosphate + NADH + H(+). The enzyme catalyses sn-glycerol 3-phosphate + NADP(+) = dihydroxyacetone phosphate + NADPH + H(+). The protein operates within membrane lipid metabolism; glycerophospholipid metabolism. In terms of biological role, catalyzes the reduction of the glycolytic intermediate dihydroxyacetone phosphate (DHAP) to sn-glycerol 3-phosphate (G3P), the key precursor for phospholipid synthesis. The sequence is that of Glycerol-3-phosphate dehydrogenase [NAD(P)+] from Halalkalibacterium halodurans (strain ATCC BAA-125 / DSM 18197 / FERM 7344 / JCM 9153 / C-125) (Bacillus halodurans).